The chain runs to 262 residues: Ornithine carbamoyltransferase (262 aa).

Residues 3–7 (STRTR), Gln30, Arg54, and 81–84 (HPTQ) contribute to the carbamoyl phosphate site. Residues Asn114, Asp178, and 182-183 (SM) each bind L-ornithine. Carbamoyl phosphate contacts are provided by residues 219–222 (HCLP) and Thr247.

It belongs to the aspartate/ornithine carbamoyltransferase superfamily. OTCase family.

The protein resides in the cytoplasm. The catalysed reaction is carbamoyl phosphate + L-ornithine = L-citrulline + phosphate + H(+). It functions in the pathway amino-acid biosynthesis; L-arginine biosynthesis; L-arginine from L-ornithine and carbamoyl phosphate: step 1/3. In terms of biological role, reversibly catalyzes the transfer of the carbamoyl group from carbamoyl phosphate (CP) to the N(epsilon) atom of ornithine (ORN) to produce L-citrulline. This is Ornithine carbamoyltransferase (argF) from Neisseria lactamica.